Consider the following 23-residue polypeptide: Testis ecdysiotropin peptide B (23 aa).

Functionally, stimulates synthesis of ecdysteroid in the testes of larvae and pupae. This chain is Testis ecdysiotropin peptide B, found in Lymantria dispar (Gypsy moth).